A 353-amino-acid polypeptide reads, in one-letter code: Basic membrane protein C (353 aa).

An N-terminal signal peptide occupies residues 1-16; sequence MFKRFIFITLSLLVFA. Cysteine 17 carries the N-palmitoyl cysteine lipid modification. The S-diacylglycerol cysteine moiety is linked to residue cysteine 17.

The protein belongs to the BMP lipoprotein family. In terms of assembly, monomer.

The protein resides in the cell inner membrane. Its function is as follows. May be part of an ABC-type nucleoside uptake system involved in the purine salvage pathway. The protein is Basic membrane protein C (bmpC) of Borreliella burgdorferi (strain ATCC 35210 / DSM 4680 / CIP 102532 / B31) (Borrelia burgdorferi).